Consider the following 132-residue polypeptide: Ubiquinol-cytochrome c reductase complex assembly factor 4 (132 aa).

Residues 1 to 15 (MNRVLCAPAAGAVRA) form the signal peptide. The Mitochondrial matrix segment spans residues 16 to 78 (LRLIGRTSRS…GKGHQRPWWK (63 aa)). Residues 24–73 (RSLHPLPGSRDRAHPAAEEQDDPDRPTEFSSSKANPRRWSVGHSMGKGHQ) are disordered. Positions 32–50 (SRDRAHPAAEEQDDPDRPT) are enriched in basic and acidic residues. A helical membrane pass occupies residues 79-95 (VLPLSCFLVALIIWCYL). At 96 to 132 (REESEADQWLRQVWGEVPEPSDRSEEPETPAAYRART) the chain is on the mitochondrial intermembrane side. Residues 110-132 (GEVPEPSDRSEEPETPAAYRART) are disordered.

It belongs to the UQCC4 family. In terms of assembly, forms a complex, named COMB/coordinator of mitochondrial CYTB biogenesis, composed of UQCC1, UQCC2, UQCC4, UQCC5 and UQCC6; stabilizes nascent cytochrome b/MT-CYB and promotes its membrane insertion. Forms a complex, named COMA, composed of UQCC1, UQCC2 and UQCC4; activates MT-CYB translation. Forms a complex, named COMC, composed of UQCC1, UQCC2; UQCC3 and UQCC4; mediates MT-CYB hemylation and association with the first nuclear-encoded complex III subunit UQCRQ. Complexes COMA and COMB are bound to the mitochondrion inner membrane by UQCC4.

The protein localises to the mitochondrion inner membrane. Required for the assembly and stability of the mitochondrial ubiquinol-cytochrome c reductase complex (complex III (CIII) or cytochrome b-c1 complex), a multisubunit transmembrane complex that is part of the mitochondrial electron transport chain (ETC) which drives oxidative phosphorylation. The polypeptide is Ubiquinol-cytochrome c reductase complex assembly factor 4 (UQCC4) (Pongo abelii (Sumatran orangutan)).